The following is a 572-amino-acid chain: MAKYVVTSAWPYVNHVPHLGTLIGSVLSADIYARYLRLRGRQVVFVSGSDEHGTPIELEARKKGVHPKELTDQVHEYDVKMWREYRISFDNYSRTESPVHKEFVMEFMKKLEENGYIFSQEEVLPYCERDKIFLPDRFVEGTCPYCGYEKARGDQCDECGRLLHPTELKNPRCALCGSKPVYKSTRHWFIDLRRVQDRLLKWLESHGELQDSVKKYSINWVAQGLKPRSVTRDLSWGVPAPFKGAEGKTIYVWFDALLGYVSATKELFIMRRGDPEEWKSWWWDSGTRTVYFIGKDNIPFHAIILPALFLASHDPYVLPWRISATEYLMYEGQQFSKSRRIGVWIDEALEIAPADYWRWALARMRPEARDTNFTWKEFYRIVNTELNDDIGNFVNRVLSLVRSRMSGVAPEPEDLGEHQGFVERVRRAAWAVAEDLEAIRIKRATEGILEIAREGNAYLNRTQPWKLLSQDREEGVRALSAALYAVKTLAHLLAPFTPDAADRLWSMLGLAGSVHEAVWDEWLDRPLPGGARIVRVEPLFQKLPDDFLERVDEIVEDARRRAREKRPPLLRD.

A 'HIGH' region motif is present at residues Pro-11–Thr-21. Residues Cys-143, Cys-146, Cys-156, and Cys-159 each coordinate Zn(2+). The 'KMSKS' region motif lies at Gln-334–Ser-338. Lys-337 contacts ATP.

It belongs to the class-I aminoacyl-tRNA synthetase family. MetG type 1 subfamily. The cofactor is Zn(2+).

The protein localises to the cytoplasm. It catalyses the reaction tRNA(Met) + L-methionine + ATP = L-methionyl-tRNA(Met) + AMP + diphosphate. Functionally, is required not only for elongation of protein synthesis but also for the initiation of all mRNA translation through initiator tRNA(fMet) aminoacylation. This is Methionine--tRNA ligase (metG) from Aeropyrum pernix (strain ATCC 700893 / DSM 11879 / JCM 9820 / NBRC 100138 / K1).